The sequence spans 72 residues: ATP synthase subunit c (72 aa).

The next 2 membrane-spanning stretches (helical) occupy residues 1–21 and 49–69; these read MSLG…GAGI and FIGV…AFIV.

It belongs to the ATPase C chain family. In terms of assembly, F-type ATPases have 2 components, F(1) - the catalytic core - and F(0) - the membrane proton channel. F(1) has five subunits: alpha(3), beta(3), gamma(1), delta(1), epsilon(1). F(0) has three main subunits: a(1), b(2) and c(10-14). The alpha and beta chains form an alternating ring which encloses part of the gamma chain. F(1) is attached to F(0) by a central stalk formed by the gamma and epsilon chains, while a peripheral stalk is formed by the delta and b chains.

The protein resides in the cell membrane. Functionally, f(1)F(0) ATP synthase produces ATP from ADP in the presence of a proton or sodium gradient. F-type ATPases consist of two structural domains, F(1) containing the extramembraneous catalytic core and F(0) containing the membrane proton channel, linked together by a central stalk and a peripheral stalk. During catalysis, ATP synthesis in the catalytic domain of F(1) is coupled via a rotary mechanism of the central stalk subunits to proton translocation. Its function is as follows. Key component of the F(0) channel; it plays a direct role in translocation across the membrane. A homomeric c-ring of between 10-14 subunits forms the central stalk rotor element with the F(1) delta and epsilon subunits. The polypeptide is ATP synthase subunit c (Bacillus anthracis (strain A0248)).